Here is a 115-residue protein sequence, read N- to C-terminus: Large ribosomal subunit protein bL19 (115 aa).

Belongs to the bacterial ribosomal protein bL19 family.

This protein is located at the 30S-50S ribosomal subunit interface and may play a role in the structure and function of the aminoacyl-tRNA binding site. The protein is Large ribosomal subunit protein bL19 of Streptococcus thermophilus (strain CNRZ 1066).